The sequence spans 151 residues: Ribosome maturation factor RimP (151 aa).

This sequence belongs to the RimP family.

It is found in the cytoplasm. Required for maturation of 30S ribosomal subunits. This chain is Ribosome maturation factor RimP, found in Pasteurella multocida (strain Pm70).